Consider the following 255-residue polypeptide: 5-oxoprolinase subunit A (255 aa).

Belongs to the LamB/PxpA family. In terms of assembly, forms a complex composed of PxpA, PxpB and PxpC.

It catalyses the reaction 5-oxo-L-proline + ATP + 2 H2O = L-glutamate + ADP + phosphate + H(+). In terms of biological role, catalyzes the cleavage of 5-oxoproline to form L-glutamate coupled to the hydrolysis of ATP to ADP and inorganic phosphate. This Nitrobacter hamburgensis (strain DSM 10229 / NCIMB 13809 / X14) protein is 5-oxoprolinase subunit A.